We begin with the raw amino-acid sequence, 505 residues long: Putative heat shock protein HSP 90-beta 4 (505 aa).

ATP is bound by residues Asn-22, Lys-83, and Phe-109. The interval 197–248 is disordered; sequence EKEISDDEEEKGEKEEEDKDDKEKPKTEDVGSDEEDDTDKNNKKKTKKIKEK. Over residues 200 to 216 the composition is skewed to acidic residues; sequence ISDDEEEKGEKEEEDKD.

This sequence belongs to the heat shock protein 90 family. As to quaternary structure, homodimer.

The protein resides in the cytoplasm. Putative molecular chaperone that may promote the maturation, structural maintenance and proper regulation of specific target proteins. The polypeptide is Putative heat shock protein HSP 90-beta 4 (HSP90AB4P) (Homo sapiens (Human)).